We begin with the raw amino-acid sequence, 325 residues long: Coiled-coil domain-containing protein 160 (325 aa).

Disordered stretches follow at residues 18–45 (SAQD…KGME) and 81–123 (ENKR…CSTD). The span at 81–91 (ENKRNISKNET) shows a compositional bias: basic and acidic residues. Residues 92 to 123 (DTNSASYESSNVDVTTEESFNSTEDNSTCSTD) are compositionally biased toward polar residues. Residues 144 to 288 (KLCLNLLNEE…SVIKNELRTE (145 aa)) are a coiled coil.

Belongs to the CCDC160 family.

This chain is Coiled-coil domain-containing protein 160 (CCDC160), found in Homo sapiens (Human).